We begin with the raw amino-acid sequence, 72 residues long: Gas vesicle protein A (72 aa).

The protein belongs to the gas vesicle GvpA family. As to quaternary structure, the gas vesicle shell is 2 nm thick and consists of a single layer of this protein. It forms helical ribs nearly perpendicular to the long axis of the vesicle.

It is found in the gas vesicle shell. Gas vesicles are hollow, gas filled proteinaceous nanostructures found in some microorganisms. During planktonic growth they allow positioning of the organism at a favorable depth for light or nutrient acquisition. GvpA forms the protein shell. The chain is Gas vesicle protein A from Pseudanabaena galeata (strain PCC 6901).